Here is a 116-residue protein sequence, read N- to C-terminus: S-adenosylmethionine decarboxylase proenzyme (116 aa).

Ser-62 functions as the Schiff-base intermediate with substrate; via pyruvic acid in the catalytic mechanism. A Pyruvic acid (Ser); by autocatalysis modification is found at Ser-62. The active-site Proton acceptor; for processing activity is His-67. Cys-82 serves as the catalytic Proton donor; for catalytic activity.

Belongs to the prokaryotic AdoMetDC family. Type 1 subfamily. As to quaternary structure, heterotetramer of two alpha and two beta chains arranged as a dimer of alpha/beta heterodimers. It depends on pyruvate as a cofactor. Is synthesized initially as an inactive proenzyme. Formation of the active enzyme involves a self-maturation process in which the active site pyruvoyl group is generated from an internal serine residue via an autocatalytic post-translational modification. Two non-identical subunits are generated from the proenzyme in this reaction, and the pyruvate is formed at the N-terminus of the alpha chain, which is derived from the carboxyl end of the proenzyme. The post-translation cleavage follows an unusual pathway, termed non-hydrolytic serinolysis, in which the side chain hydroxyl group of the serine supplies its oxygen atom to form the C-terminus of the beta chain, while the remainder of the serine residue undergoes an oxidative deamination to produce ammonia and the pyruvoyl group blocking the N-terminus of the alpha chain.

The enzyme catalyses S-adenosyl-L-methionine + H(+) = S-adenosyl 3-(methylsulfanyl)propylamine + CO2. Its pathway is amine and polyamine biosynthesis; S-adenosylmethioninamine biosynthesis; S-adenosylmethioninamine from S-adenosyl-L-methionine: step 1/1. Its function is as follows. Catalyzes the decarboxylation of S-adenosylmethionine to S-adenosylmethioninamine (dcAdoMet), the propylamine donor required for the synthesis of the polyamines spermine and spermidine from the diamine putrescine. This Thermomicrobium roseum (strain ATCC 27502 / DSM 5159 / P-2) protein is S-adenosylmethionine decarboxylase proenzyme.